The primary structure comprises 626 residues: Endogenous retrovirus group S71 member 1 Env polyprotein (626 aa).

The first 38 residues, 1–38, serve as a signal peptide directing secretion; it reads MGPEAWVRPLKTAPKPGEAIRLILFIYLSCFFLPVMSS. The segment at 39–438 is surface protein; that stretch reads EPSYSFLLTS…PPELHPRLHQ (400 aa). The Extracellular segment spans residues 39 to 575; the sequence is EPSYSFLLTS…FNWNPWLTTL (537 aa). Positions 302-305 match the CXXC motif; it reads CWLC. Residues 439-459 form a fusion peptide region; it reads AVPLLVPLLAGLSIAGSAAIG. A transmembrane protein region spans residues 439–626; it reads AVPLLVPLLA…KTQYDTLVNN (188 aa). The CKS-17 motif lies at 503–519; sequence LQNCRCLDLLFLSQGGL. C520 and C527 are joined by a disulfide. A CX6CC motif is present at residues 520–528; the sequence is CAALGESCC. Residues 576-596 form a helical membrane-spanning segment; that stretch reads ITGLAGPLLILLLSLIFGPCI. Topologically, residues 597–626 are cytoplasmic; it reads LNSFLNFIKQRIASVKLTYLKTQYDTLVNN.

This sequence belongs to the gamma type-C retroviral envelope protein family. HERV class-I T env subfamily. The CXXC motif is highly conserved across a broad range of retroviral envelope proteins. It is thought to participate in the formation of a labile disulfide bond possibly with the CX6CC motif present in the transmembrane domain. In terms of tissue distribution, expressed at higher level in thyroid. Expressed at lower level in adrenal, bone marrow, brain, breast, kidney, ovary, placenta, prostate, skin, testis and trachea.

The protein localises to the cell membrane. Retroviral envelope proteins mediate receptor recognition and membrane fusion during early infection. Endogenous envelope proteins may have kept, lost or modified their original function during evolution. This endogenous envelope protein has lost its original fusogenic properties. The polypeptide is Endogenous retrovirus group S71 member 1 Env polyprotein (ERVS71-1) (Homo sapiens (Human)).